The following is a 104-amino-acid chain: NADH-quinone oxidoreductase subunit K (104 aa).

3 helical membrane-spanning segments follow: residues Val-4–Ala-24, Val-31–Phe-51, and Leu-67–Leu-87.

It belongs to the complex I subunit 4L family. In terms of assembly, NDH-1 is composed of 14 different subunits. Subunits NuoA, H, J, K, L, M, N constitute the membrane sector of the complex.

The protein resides in the cell membrane. The catalysed reaction is a quinone + NADH + 5 H(+)(in) = a quinol + NAD(+) + 4 H(+)(out). Functionally, NDH-1 shuttles electrons from NADH, via FMN and iron-sulfur (Fe-S) centers, to quinones in the respiratory chain. The immediate electron acceptor for the enzyme in this species is believed to be a menaquinone. Couples the redox reaction to proton translocation (for every two electrons transferred, four hydrogen ions are translocated across the cytoplasmic membrane), and thus conserves the redox energy in a proton gradient. This Bacillus cytotoxicus (strain DSM 22905 / CIP 110041 / 391-98 / NVH 391-98) protein is NADH-quinone oxidoreductase subunit K.